A 99-amino-acid polypeptide reads, in one-letter code: Citrate lyase acyl carrier protein (99 aa).

Residue Ser-14 is modified to O-(phosphoribosyl dephospho-coenzyme A)serine.

The protein belongs to the CitD family. Oligomer with a subunit composition of (alpha,beta,gamma)6.

It is found in the cytoplasm. Its function is as follows. Covalent carrier of the coenzyme of citrate lyase. This chain is Citrate lyase acyl carrier protein, found in Edwardsiella ictaluri (strain 93-146).